Reading from the N-terminus, the 157-residue chain is Putative pre-16S rRNA nuclease (157 aa).

This sequence belongs to the YqgF nuclease family.

The protein localises to the cytoplasm. Functionally, could be a nuclease involved in processing of the 5'-end of pre-16S rRNA. The chain is Putative pre-16S rRNA nuclease from Ruegeria sp. (strain TM1040) (Silicibacter sp.).